We begin with the raw amino-acid sequence, 543 residues long: Transmembrane protease serine 13 (543 aa).

2 disordered regions span residues 1–96 (MDRG…TRVY) and 109–129 (RASP…PGLS). The Cytoplasmic segment spans residues 1–143 (MDRGSHRNSS…SWQETQRQLP (143 aa)). 2 tandem repeats follow at residues 14-17 (TPPQ) and 18-22 (ASPAR). Residues 14-49 (TPPQASPARTSPARAPPQASPARTPPQASPARTPPQ) are 4 X 4 AA repeats of T-P-P-Q. Residues 18 to 69 (ASPARTSPARAPPQASPARTPPQASPARTPPQASPARAPPPQASPARASPAR) are 8 X 5 AA repeats of A-S-P-A-R. The stretch at 23 to 27 (TSPAR) is one 2-2; approximate repeat. The segment covering 27–60 (RAPPQASPARTPPQASPARTPPQASPARAPPPQA) has biased composition (pro residues). The stretch at 28–31 (APPQ) is one 1-2; approximate repeat. 5 consecutive repeat copies span residues 32–36 (ASPAR), 37–40 (TPPQ), 41–45 (ASPAR), 46–49 (TPPQ), and 50–54 (ASPAR). The 2-6; approximate repeat unit spans residues 55-59 (APPPQ). A run of 2 repeats spans residues 60–64 (ASPAR) and 65–69 (ASPAR). 2 stretches are compositionally biased toward low complexity: residues 61–94 (SPAR…SPTR) and 109–120 (RASPARSAPATR). A helical; Signal-anchor for type II membrane protein membrane pass occupies residues 144–164 (LIGCVILLISLVISLILLFYF). Over 165-543 (WRGHTGIKYK…MESEVRFRKS (379 aa)) the chain is Extracellular. The LDL-receptor class A domain maps to 180 to 202 (CPIHAVRCDGVVDCKMKSDELGC). Residues 199-301 (ELGCVRFDWD…HCGLRAMTGR (103 aa)) form the SRCR domain. Disulfide bonds link cysteine 226-cysteine 290, cysteine 239-cysteine 293, and cysteine 327-cysteine 343. Asparagine 231 and asparagine 268 each carry an N-linked (GlcNAc...) asparagine glycan. The Peptidase S1 domain occupies 302–535 (IVGGALTSES…VLPWIYRKME (234 aa)). Residue histidine 342 is the Charge relay system of the active site. The N-linked (GlcNAc...) asparagine glycan is linked to asparagine 381. The active-site Charge relay system is aspartate 390. The N-linked (GlcNAc...) asparagine glycan is linked to asparagine 421. 3 disulfide bridges follow: cysteine 424-cysteine 493, cysteine 456-cysteine 472, and cysteine 483-cysteine 511. Serine 487 (charge relay system) is an active-site residue.

It belongs to the peptidase S1 family. As to quaternary structure, interacts with SPINT1/HAI-1; the interaction promotes the phosphorylation and cell membrane localization of TMPRSS13. Interacts with SPINT2/HAI-2; the interaction promotes the phosphorylation and cell membrane localization of TMPRSS13. Post-translationally, the inactive zymogen is post-translationally modified and then trafficked to the cell surface, whereby it undergoes autocatalytic cleavage resulting in an activated form that is released extracellularly. In terms of processing, phosphorylation is required for localization at the cell surface. Phosphorylation increases following inhibition of protease activity by SPINT2/HAI-2. In terms of tissue distribution, expressed in the suprabasal squamous epithelium of the epidermis, hair follicles, oral epithelium, cornea, upper digestive tract, transitional epithelium of the bladder, prostate, heart, intestine, kidney and thymus.

It is found in the cell membrane. The protein resides in the secreted. The protein localises to the cytoplasm. Cleavage of HGF is inhibited by SPINT1/HAI-1 via the BPTI/Kunitz inhibitor 1 domain. In terms of biological role, serine protease. Cleaves the proform of PRSS8/prostasin to form the active protein. Cleaves the proform of HGF to form the active protein which promotes MAPK signaling. Promotes the formation of the stratum corneum and subsequently the epidermal barrier in embryos. This Mus musculus (Mouse) protein is Transmembrane protease serine 13 (Tmprss13).